The chain runs to 275 residues: 4-hydroxy-3-methylbut-2-enyl diphosphate reductase (275 aa).

[4Fe-4S] cluster is bound at residue C12. Residues H36 and H70 each contribute to the (2E)-4-hydroxy-3-methylbut-2-enyl diphosphate site. H36 and H70 together coordinate dimethylallyl diphosphate. The isopentenyl diphosphate site is built by H36 and H70. Residue C92 coordinates [4Fe-4S] cluster. Position 120 (H120) interacts with (2E)-4-hydroxy-3-methylbut-2-enyl diphosphate. H120 contacts dimethylallyl diphosphate. Position 120 (H120) interacts with isopentenyl diphosphate. Residue E122 is the Proton donor of the active site. T157 provides a ligand contact to (2E)-4-hydroxy-3-methylbut-2-enyl diphosphate. C185 is a [4Fe-4S] cluster binding site. The (2E)-4-hydroxy-3-methylbut-2-enyl diphosphate site is built by S213, S214, N215, and S257. Residues S213, S214, N215, and S257 each coordinate dimethylallyl diphosphate. Positions 213, 214, 215, and 257 each coordinate isopentenyl diphosphate.

This sequence belongs to the IspH family. Requires [4Fe-4S] cluster as cofactor.

The catalysed reaction is isopentenyl diphosphate + 2 oxidized [2Fe-2S]-[ferredoxin] + H2O = (2E)-4-hydroxy-3-methylbut-2-enyl diphosphate + 2 reduced [2Fe-2S]-[ferredoxin] + 2 H(+). It carries out the reaction dimethylallyl diphosphate + 2 oxidized [2Fe-2S]-[ferredoxin] + H2O = (2E)-4-hydroxy-3-methylbut-2-enyl diphosphate + 2 reduced [2Fe-2S]-[ferredoxin] + 2 H(+). It participates in isoprenoid biosynthesis; dimethylallyl diphosphate biosynthesis; dimethylallyl diphosphate from (2E)-4-hydroxy-3-methylbutenyl diphosphate: step 1/1. Its pathway is isoprenoid biosynthesis; isopentenyl diphosphate biosynthesis via DXP pathway; isopentenyl diphosphate from 1-deoxy-D-xylulose 5-phosphate: step 6/6. Catalyzes the conversion of 1-hydroxy-2-methyl-2-(E)-butenyl 4-diphosphate (HMBPP) into a mixture of isopentenyl diphosphate (IPP) and dimethylallyl diphosphate (DMAPP). Acts in the terminal step of the DOXP/MEP pathway for isoprenoid precursor biosynthesis. This chain is 4-hydroxy-3-methylbut-2-enyl diphosphate reductase, found in Nitratiruptor sp. (strain SB155-2).